The following is an 851-amino-acid chain: Envelope glycoprotein gp160 (851 aa).

An N-terminal signal peptide occupies residues 1–32; sequence MRVKEKYQHLWRWGWRWGTMLLGMLMICSATE. Residues 33–679 lie on the Extracellular side of the membrane; that stretch reads KLWVTVYFGV…ITNWLWYIKL (647 aa). C54 and C74 are oxidised to a cystine. N-linked (GlcNAc...) asparagine; by host glycans are attached at residues N88, N136, N141, N156, N160, N186, N197, N230, N234, N241, N262, N276, N295, N301, N332, N339, and N356. 5 disulfide bridges follow: C119/C205, C126/C196, C131/C157, C218/C247, and C228/C239. The tract at residues 131–156 is V1; the sequence is CTDLKNDTNTNSSSGRMIMEKGEIKN. The interval 157–196 is V2; it reads CSFNISTSKRGKVQKEYAFFYKLDIIPIDNDTTSYTLTSC. Residues 296–330 form a V3 region; the sequence is CTRPNNNTRKKIRIQRGPGRAFVTIGKIGNMRQAH. A disulfide bond links C296 and C331. Residues 364–374 are CD4-binding loop; that stretch reads SSGGDPEIVTH. 2 disulfide bridges follow: C378-C440 and C385-C413. The interval 385–413 is V4; that stretch reads CNSTQLFNSTWSTKGSNNTEGSDTITLPC. N386, N392, N401, N443, and N458 each carry an N-linked (GlcNAc...) asparagine; by host glycan. 2 V5 regions span residues 456–466 and 458–466; these read SNNESEIFRPG and NESEIFRPG. A fusion peptide region spans residues 507–527; it reads AVGIGALFLGFLGAAGSTMGA. The tract at residues 569–587 is immunosuppression; it reads KQLQARILAVERYLKDQQL. Residues C593 and C599 are joined by a disulfide bond. N-linked (GlcNAc...) asparagine; by host glycans are attached at residues N606, N611, N620, N632, and N669. Residues 628-662 are a coiled coil; that stretch reads REINNYTSLIHSLIEESQNQQEKNEQELLELDKWA. The MPER; binding to GalCer stretch occupies residues 657–678; sequence ELDKWASLWNWFNITNWLWYIK. A helical transmembrane segment spans residues 680 to 700; it reads FIMIVGGLVGLRIVFAVLSIV. Over 701 to 851 the chain is Cytoplasmic; it reads NRVRQGYSPL…IRQGLERILL (151 aa). The YXXL motif; contains endocytosis signal motif lies at 707 to 710; it reads YSPL. The tract at residues 713-735 is disordered; sequence QTHLPNPRGPDRPEGIEEEGGER. The S-palmitoyl cysteine; by host moiety is linked to residue C759. The short motif at 850–851 is the Di-leucine internalization motif element; sequence LL.

Belongs to the HIV-1 env protein family. In terms of assembly, the mature envelope protein (Env) consists of a homotrimer of non-covalently associated gp120-gp41 heterodimers. The resulting complex protrudes from the virus surface as a spike. There seems to be as few as 10 spikes on the average virion. Interacts with host CD4, CCR5 and CXCR4. Gp120 also interacts with the C-type lectins CD209/DC-SIGN and CLEC4M/DC-SIGNR (collectively referred to as DC-SIGN(R)). Gp120 and gp41 interact with GalCer. Gp120 interacts with host ITGA4/ITGB7 complex; on CD4+ T-cells, this interaction results in rapid activation of integrin ITGAL/LFA-1, which facilitates efficient cell-to-cell spreading of HIV-1. Gp120 interacts with cell-associated heparan sulfate; this interaction increases virus infectivity on permissive cells and may be involved in infection of CD4- cells. As to quaternary structure, the mature envelope protein (Env) consists of a homotrimer of non-covalently associated gp120-gp41 heterodimers. The resulting complex protrudes from the virus surface as a spike. There seems to be as few as 10 spikes on the average virion. Post-translationally, highly glycosylated by host. The high number of glycan on the protein is reffered to as 'glycan shield' because it contributes to hide protein sequence from adaptive immune system. In terms of processing, palmitoylation of the transmembrane protein and of Env polyprotein (prior to its proteolytic cleavage) is essential for their association with host cell membrane lipid rafts. Palmitoylation is therefore required for envelope trafficking to classical lipid rafts, but not for viral replication. Specific enzymatic cleavages in vivo yield mature proteins. Envelope glycoproteins are synthesized as an inactive precursor that is heavily N-glycosylated and processed likely by host cell furin in the Golgi to yield the mature SU and TM proteins. The cleavage site between SU and TM requires the minimal sequence [KR]-X-[KR]-R. About 2 of the 9 disulfide bonds of gp41 are reduced by P4HB/PDI, following binding to CD4 receptor.

It localises to the virion membrane. Its subcellular location is the host cell membrane. The protein localises to the host endosome membrane. In terms of biological role, oligomerizes in the host endoplasmic reticulum into predominantly trimers. In a second time, gp160 transits in the host Golgi, where glycosylation is completed. The precursor is then proteolytically cleaved in the trans-Golgi and thereby activated by cellular furin or furin-like proteases to produce gp120 and gp41. Attaches the virus to the host lymphoid cell by binding to the primary receptor CD4. This interaction induces a structural rearrangement creating a high affinity binding site for a chemokine coreceptor like CXCR4 and/or CCR5. Acts as a ligand for CD209/DC-SIGN and CLEC4M/DC-SIGNR, which are respectively found on dendritic cells (DCs), and on endothelial cells of liver sinusoids and lymph node sinuses. These interactions allow capture of viral particles at mucosal surfaces by these cells and subsequent transmission to permissive cells. HIV subverts the migration properties of dendritic cells to gain access to CD4+ T-cells in lymph nodes. Virus transmission to permissive T-cells occurs either in trans (without DCs infection, through viral capture and transmission), or in cis (following DCs productive infection, through the usual CD4-gp120 interaction), thereby inducing a robust infection. In trans infection, bound virions remain infectious over days and it is proposed that they are not degraded, but protected in non-lysosomal acidic organelles within the DCs close to the cell membrane thus contributing to the viral infectious potential during DCs' migration from the periphery to the lymphoid tissues. On arrival at lymphoid tissues, intact virions recycle back to DCs' cell surface allowing virus transmission to CD4+ T-cells. Functionally, acts as a class I viral fusion protein. Under the current model, the protein has at least 3 conformational states: pre-fusion native state, pre-hairpin intermediate state, and post-fusion hairpin state. During fusion of viral and target intracellular membranes, the coiled coil regions (heptad repeats) assume a trimer-of-hairpins structure, positioning the fusion peptide in close proximity to the C-terminal region of the ectodomain. The formation of this structure appears to drive apposition and subsequent fusion of viral and target cell membranes. Complete fusion occurs in host cell endosomes and is dynamin-dependent, however some lipid transfer might occur at the plasma membrane. The virus undergoes clathrin-dependent internalization long before endosomal fusion, thus minimizing the surface exposure of conserved viral epitopes during fusion and reducing the efficacy of inhibitors targeting these epitopes. Membranes fusion leads to delivery of the nucleocapsid into the cytoplasm. In Homo sapiens (Human), this protein is Envelope glycoprotein gp160.